A 513-amino-acid chain; its full sequence is MTNLVNEMILVLDFGSQYNQLITRRIREFGVYSELHPHTLTAEEIKEMAPKGIILSGGPNSVYDEGSFRCDEKIFDLDIPVLGICYGMQLMTHYLGGKVEAASQREYGKADIHINGTPALFKDLPTDQVVWMSHGDLVVEVPEGFTVDATSAHCPNSAMSLAEKNFYGVQFHPEVRHSEYGNDLLKNFVFGVCDCDGKWSMENFIEIEMQKIRETVGDKQVLCALSGGVDSSVVAVLIHKAIGDQLTCIFVDHGLLRKGEAEGVMKTFSEGFNMNVIKVDAKDRFLNKLKGVSDPEQKRKIIGNEFIYVFDDESDKLKGIDYLAQGTLYTDIIESGTATAQTIKSHHNVGGLPEDMQFELIEPLNTLFKDEVRALGSELGIPDDIVWRQPFPGPGLGIRVLGEISEEKLEIVRESDAILREEIANFGLERDIWQYFTVLPDIRSVGVMGDARTYDYTIGIRAVTSIDGMTSDWARIPWDVLEKISTRIVNEVKHVNRVVYDITSKPPATIEWE.

The Glutamine amidotransferase type-1 domain occupies 8–198 (MILVLDFGSQ…VFGVCDCDGK (191 aa)). The active-site Nucleophile is Cys-85. Active-site residues include His-172 and Glu-174. In terms of domain architecture, GMPS ATP-PPase spans 199 to 388 (WSMENFIEIE…LGIPDDIVWR (190 aa)). 226 to 232 (SGGVDSS) serves as a coordination point for ATP.

As to quaternary structure, homodimer.

It carries out the reaction XMP + L-glutamine + ATP + H2O = GMP + L-glutamate + AMP + diphosphate + 2 H(+). It participates in purine metabolism; GMP biosynthesis; GMP from XMP (L-Gln route): step 1/1. Catalyzes the synthesis of GMP from XMP. The protein is GMP synthase [glutamine-hydrolyzing] of Bacillus pumilus (strain SAFR-032).